A 300-amino-acid polypeptide reads, in one-letter code: Cation-efflux pump FieF (300 aa).

Helical transmembrane passes span 12–32 (AAIA…FAWW), 39–59 (ILAA…NLLV), 82–102 (AALA…LTGI), and 114–134 (PGVG…LVSF). Residues Asp-45 and Asp-49 each contribute to the Zn(2+) site. His-153 and Asp-157 together coordinate Zn(2+). The next 2 membrane-spanning stretches (helical) occupy residues 156–176 (SDVM…YGWH) and 178–198 (ADAL…LRMG).

The protein belongs to the cation diffusion facilitator (CDF) transporter (TC 2.A.4) family. FieF subfamily. Homodimer.

The protein localises to the cell inner membrane. The enzyme catalyses Zn(2+)(in) + H(+)(out) = Zn(2+)(out) + H(+)(in). It catalyses the reaction Cd(2+)(in) + H(+)(out) = Cd(2+)(out) + H(+)(in). It carries out the reaction Fe(2+)(in) + H(+)(out) = Fe(2+)(out) + H(+)(in). Divalent metal cation transporter which exports Zn(2+), Cd(2+) and possibly Fe(2+). May be involved in zinc and iron detoxification by efflux. In Escherichia coli O157:H7 (strain EC4115 / EHEC), this protein is Cation-efflux pump FieF.